The sequence spans 224 residues: Ribonuclease 3 (224 aa).

One can recognise an RNase III domain in the interval 5-127 (LERLCRRLNY…ILAAIYLDGG (123 aa)). Glu-40 lines the Mg(2+) pocket. Residue Asp-44 is part of the active site. Mg(2+)-binding residues include Asp-113 and Glu-116. Residue Glu-116 is part of the active site. The DRBM domain maps to 154-224 (DAKTQLQEFL…AKAMLEQLQG (71 aa)).

Belongs to the ribonuclease III family. In terms of assembly, homodimer. The cofactor is Mg(2+).

The protein resides in the cytoplasm. The catalysed reaction is Endonucleolytic cleavage to 5'-phosphomonoester.. In terms of biological role, digests double-stranded RNA. Involved in the processing of primary rRNA transcript to yield the immediate precursors to the large and small rRNAs (23S and 16S). Processes some mRNAs, and tRNAs when they are encoded in the rRNA operon. Processes pre-crRNA and tracrRNA of type II CRISPR loci if present in the organism. This is Ribonuclease 3 from Legionella pneumophila (strain Paris).